The following is a 189-amino-acid chain: Auxin-responsive protein IAA6 (189 aa).

Residues 13-17 (LRLGL) carry the EAR-like (transcriptional repression) motif. In terms of domain architecture, PB1 spans 93–178 (IGYVKVSMDG…SCKRLRIVKR (86 aa)).

This sequence belongs to the Aux/IAA family. In terms of assembly, homodimers and heterodimers. Interacts with TPL. In terms of tissue distribution, highly expressed in stems and flowers.

Its subcellular location is the nucleus. Its function is as follows. Aux/IAA proteins are short-lived transcriptional factors that function as repressors of early auxin response genes at low auxin concentrations. Repression is thought to result from the interaction with auxin response factors (ARFs), proteins that bind to the auxin-responsive promoter element (AuxRE). Formation of heterodimers with ARF proteins may alter their ability to modulate early auxin response genes expression. In Arabidopsis thaliana (Mouse-ear cress), this protein is Auxin-responsive protein IAA6 (IAA6).